The following is a 588-amino-acid chain: Arylsulfatase L (588 aa).

A signal peptide spans 1–31; sequence MLHLHHSWLCFRSWLAGMLSVLLGLVPSASS. N-linked (GlcNAc...) asparagine glycosylation occurs at Asn32. Residues Asp46 and Asp47 each contribute to the Ca(2+) site. An N-linked (GlcNAc...) asparagine glycan is attached at Asn58. Cys86 provides a ligand contact to Ca(2+). Catalysis depends on Cys86, which acts as the Nucleophile. Cys86 carries the 3-oxoalanine (Cys) modification. An N-linked (GlcNAc...) asparagine glycan is attached at Asn125. Lys145 lines the substrate pocket. His147 is a catalytic residue. A glycan (N-linked (GlcNAc...) asparagine) is linked at Asn258. Residue His301 coordinates substrate. A glycan (N-linked (GlcNAc...) asparagine) is linked at Asn344. Ca(2+) is bound by residues Asp353 and His354. Residue Lys378 participates in substrate binding.

Belongs to the sulfatase family. It depends on Ca(2+) as a cofactor. Post-translationally, the conversion to 3-oxoalanine (also known as C-formylglycine, FGly), of a serine or cysteine residue in prokaryotes and of a cysteine residue in eukaryotes, is critical for catalytic activity.

The protein resides in the golgi apparatus. It is found in the golgi stack. The enzyme catalyses an aryl sulfate + H2O = a phenol + sulfate + H(+). Its function is as follows. Exhibits arylsulfatase activity towards the artificial substrate 4-methylumbelliferyl sulfate. May be essential for the correct composition of cartilage and bone matrix during development. Has no activity toward steroid sulfates. This is Arylsulfatase L (ARSL) from Macaca fascicularis (Crab-eating macaque).